A 170-amino-acid polypeptide reads, in one-letter code: Large ribosomal subunit protein bL17 (170 aa).

Positions 134-144 (ASAKAAQAQEK) are enriched in low complexity. The interval 134 to 170 (ASAKAAQAQEKPAQEEEVEATSDEVAYTSEPDKAAEH) is disordered.

The protein belongs to the bacterial ribosomal protein bL17 family. As to quaternary structure, part of the 50S ribosomal subunit. Contacts protein L32.

The chain is Large ribosomal subunit protein bL17 from Mycobacterium leprae (strain Br4923).